A 158-amino-acid chain; its full sequence is Cyclic pyranopterin monophosphate synthase (158 aa).

Residues 74–76 (MCH) and 112–113 (ME) each bind substrate. D127 is an active-site residue.

This sequence belongs to the MoaC family. In terms of assembly, homohexamer; trimer of dimers.

The enzyme catalyses (8S)-3',8-cyclo-7,8-dihydroguanosine 5'-triphosphate = cyclic pyranopterin phosphate + diphosphate. It participates in cofactor biosynthesis; molybdopterin biosynthesis. In terms of biological role, catalyzes the conversion of (8S)-3',8-cyclo-7,8-dihydroguanosine 5'-triphosphate to cyclic pyranopterin monophosphate (cPMP). The protein is Cyclic pyranopterin monophosphate synthase of Helicobacter pylori (strain P12).